The following is a 230-amino-acid chain: UPF0173 metal-dependent hydrolase RHOS4_08540 (230 aa).

Belongs to the UPF0173 family.

The sequence is that of UPF0173 metal-dependent hydrolase RHOS4_08540 from Cereibacter sphaeroides (strain ATCC 17023 / DSM 158 / JCM 6121 / CCUG 31486 / LMG 2827 / NBRC 12203 / NCIMB 8253 / ATH 2.4.1.) (Rhodobacter sphaeroides).